A 255-amino-acid polypeptide reads, in one-letter code: 14-3-3-like protein B (255 aa).

Belongs to the 14-3-3 family.

This chain is 14-3-3-like protein B, found in Nicotiana tabacum (Common tobacco).